The chain runs to 184 residues: Elongation factor P (184 aa).

It belongs to the elongation factor P family.

It is found in the cytoplasm. The protein operates within protein biosynthesis; polypeptide chain elongation. Involved in peptide bond synthesis. Stimulates efficient translation and peptide-bond synthesis on native or reconstituted 70S ribosomes in vitro. Probably functions indirectly by altering the affinity of the ribosome for aminoacyl-tRNA, thus increasing their reactivity as acceptors for peptidyl transferase. The sequence is that of Elongation factor P from Paracidovorax citrulli (strain AAC00-1) (Acidovorax citrulli).